We begin with the raw amino-acid sequence, 192 residues long: Xanthine phosphoribosyltransferase (192 aa).

Residues L20 and N27 each coordinate xanthine. 5-phospho-alpha-D-ribose 1-diphosphate is bound at residue 128–132 (ANGDA). K156 provides a ligand contact to xanthine.

Belongs to the purine/pyrimidine phosphoribosyltransferase family. Xpt subfamily. In terms of assembly, homodimer.

The protein resides in the cytoplasm. The catalysed reaction is XMP + diphosphate = xanthine + 5-phospho-alpha-D-ribose 1-diphosphate. It participates in purine metabolism; XMP biosynthesis via salvage pathway; XMP from xanthine: step 1/1. In terms of biological role, converts the preformed base xanthine, a product of nucleic acid breakdown, to xanthosine 5'-monophosphate (XMP), so it can be reused for RNA or DNA synthesis. This Staphylococcus carnosus (strain TM300) protein is Xanthine phosphoribosyltransferase.